A 498-amino-acid polypeptide reads, in one-letter code: ATP synthase subunit beta, chloroplastic (498 aa).

An ATP-binding site is contributed by 172–179; that stretch reads GGAGVGKT.

It belongs to the ATPase alpha/beta chains family. In terms of assembly, F-type ATPases have 2 components, CF(1) - the catalytic core - and CF(0) - the membrane proton channel. CF(1) has five subunits: alpha(3), beta(3), gamma(1), delta(1), epsilon(1). CF(0) has four main subunits: a(1), b(1), b'(1) and c(9-12).

Its subcellular location is the plastid. It is found in the chloroplast thylakoid membrane. The catalysed reaction is ATP + H2O + 4 H(+)(in) = ADP + phosphate + 5 H(+)(out). Functionally, produces ATP from ADP in the presence of a proton gradient across the membrane. The catalytic sites are hosted primarily by the beta subunits. This is ATP synthase subunit beta, chloroplastic from Balaka seemannii.